A 629-amino-acid polypeptide reads, in one-letter code: 1-deoxy-D-xylulose-5-phosphate synthase (629 aa).

Residues His-72 and 113–115 (GHA) contribute to the thiamine diphosphate site. Position 144 (Asp-144) interacts with Mg(2+). Thiamine diphosphate contacts are provided by residues 145–146 (GA), Asn-174, Tyr-287, and Glu-370. Asn-174 contributes to the Mg(2+) binding site.

Belongs to the transketolase family. DXPS subfamily. Homodimer. Mg(2+) is required as a cofactor. The cofactor is thiamine diphosphate.

The catalysed reaction is D-glyceraldehyde 3-phosphate + pyruvate + H(+) = 1-deoxy-D-xylulose 5-phosphate + CO2. Its pathway is metabolic intermediate biosynthesis; 1-deoxy-D-xylulose 5-phosphate biosynthesis; 1-deoxy-D-xylulose 5-phosphate from D-glyceraldehyde 3-phosphate and pyruvate: step 1/1. In terms of biological role, catalyzes the acyloin condensation reaction between C atoms 2 and 3 of pyruvate and glyceraldehyde 3-phosphate to yield 1-deoxy-D-xylulose-5-phosphate (DXP). This Prochlorococcus marinus (strain MIT 9301) protein is 1-deoxy-D-xylulose-5-phosphate synthase.